Consider the following 500-residue polypeptide: NAD(P)H-quinone oxidoreductase chain 4, chloroplastic (500 aa).

Transmembrane regions (helical) follow at residues 3-23 (FFPW…IILF), 37-57 (ICIC…HFQL), 87-107 (IGPI…AWPV), 113-130 (LFHF…GLFA), 134-154 (LLLF…LLSM), 167-187 (FILY…GVGL), 208-228 (ALEI…SPII), 242-262 (HYST…YGLI), 272-292 (AHSI…IYAA), 305-325 (IAYS…SIND), 330-350 (GAIL…FLAG), 364-384 (MGGI…FSMA), 386-406 (LALP…GIIT), 411-431 (LLIS…LTPI), and 462-482 (LFVS…PDFV).

Belongs to the complex I subunit 4 family.

It is found in the plastid. It localises to the chloroplast thylakoid membrane. The catalysed reaction is a plastoquinone + NADH + (n+1) H(+)(in) = a plastoquinol + NAD(+) + n H(+)(out). It carries out the reaction a plastoquinone + NADPH + (n+1) H(+)(in) = a plastoquinol + NADP(+) + n H(+)(out). In Daucus carota (Wild carrot), this protein is NAD(P)H-quinone oxidoreductase chain 4, chloroplastic.